We begin with the raw amino-acid sequence, 309 residues long: Aspartate carbamoyltransferase catalytic subunit (309 aa).

Carbamoyl phosphate contacts are provided by Arg55 and Thr56. Residue Lys85 participates in L-aspartate binding. Residues Arg106, His135, and Gln138 each contribute to the carbamoyl phosphate site. The L-aspartate site is built by Arg168 and Arg230. Carbamoyl phosphate-binding residues include Leu268 and Pro269.

Belongs to the aspartate/ornithine carbamoyltransferase superfamily. ATCase family. In terms of assembly, heterododecamer (2C3:3R2) of six catalytic PyrB chains organized as two trimers (C3), and six regulatory PyrI chains organized as three dimers (R2).

It catalyses the reaction carbamoyl phosphate + L-aspartate = N-carbamoyl-L-aspartate + phosphate + H(+). Its pathway is pyrimidine metabolism; UMP biosynthesis via de novo pathway; (S)-dihydroorotate from bicarbonate: step 2/3. Functionally, catalyzes the condensation of carbamoyl phosphate and aspartate to form carbamoyl aspartate and inorganic phosphate, the committed step in the de novo pyrimidine nucleotide biosynthesis pathway. This is Aspartate carbamoyltransferase catalytic subunit from Vibrio vulnificus (strain CMCP6).